The following is a 174-amino-acid chain: MNYFELFKFPPTFDIDTAVLADRYRELQRAVHPDKFANDTEQQRLLSVQRTAQVNDGYQTLKDPIRRAEHMLSLRGIDLSHETTTVKDTAFLMQQMEWREALEDIRESIDHQAIINELYDSFAAYRLKLTKLLAAQLSSGSDEDALLAADQVRKLKFMAKLQDELTRIEDALLD.

Residues 2–74 form the J domain; it reads NYFELFKFPP…IRRAEHMLSL (73 aa).

The protein belongs to the HscB family. As to quaternary structure, interacts with HscA and stimulates its ATPase activity.

Functionally, co-chaperone involved in the maturation of iron-sulfur cluster-containing proteins. Seems to help targeting proteins to be folded toward HscA. This is Co-chaperone protein HscB homolog from Shewanella oneidensis (strain ATCC 700550 / JCM 31522 / CIP 106686 / LMG 19005 / NCIMB 14063 / MR-1).